A 293-amino-acid chain; its full sequence is MNSYWLNVYKPRGISSAKLVSIIKKVLGKVKIGHSGTLDVEAEGVLPLAIGEATKLVQMLIDAKKTYIFTVKFGKQTDSGDYAGKVIAITDYIPSKENAYAICSKFIGTITQIPPAFSALKVNGVRAYKLARDGKEVELKPRNITIYDLKCLNYDEQNATATYYAECSKGTYIRTLAEDLALSLQSLGFVIELRRTQVGIFKEENSIRIDSFNDITKLSLEEKNIKIEAILDDILVLDANDEQAQKIKYGQKCLFDYDKNVDFMWVRYKGVLLAIGSLNKNCFHSLRVFNLTQ.

Asp39 serves as the catalytic Nucleophile.

The protein belongs to the pseudouridine synthase TruB family. Type 1 subfamily.

The enzyme catalyses uridine(55) in tRNA = pseudouridine(55) in tRNA. Responsible for synthesis of pseudouridine from uracil-55 in the psi GC loop of transfer RNAs. The sequence is that of tRNA pseudouridine synthase B from Rickettsia bellii (strain OSU 85-389).